The following is a 61-amino-acid chain: Bacteriocin leucocin-A (61 aa).

A propeptide spanning residues 1–24 (MMNMKPTESYEQLDNSALEQVVGG) is cleaved from the precursor. A disulfide bridge links C33 with C38.

It belongs to the bacteriocin class IIA/YGNGV family.

The protein resides in the secreted. Its function is as follows. Inhibits a wide spectrum of lactic acid bacteria. The sequence is that of Bacteriocin leucocin-A (lcnA) from Leuconostoc gelidum.